The primary structure comprises 277 residues: 14-3-3 protein (277 aa).

A disordered region spans residues 252-277 (LQTQEQQQQPVGEGAEAPKVEATEQQ). The segment covering 267–277 (EAPKVEATEQQ) has biased composition (basic and acidic residues).

The protein belongs to the 14-3-3 family.

The chain is 14-3-3 protein from Eimeria tenella (Coccidian parasite).